Consider the following 119-residue polypeptide: Large ribosomal subunit protein uL18 (119 aa).

It belongs to the universal ribosomal protein uL18 family. In terms of assembly, part of the 50S ribosomal subunit; part of the 5S rRNA/L5/L18/L25 subcomplex. Contacts the 5S and 23S rRNAs.

This is one of the proteins that bind and probably mediate the attachment of the 5S RNA into the large ribosomal subunit, where it forms part of the central protuberance. The sequence is that of Large ribosomal subunit protein uL18 from Xanthomonas campestris pv. campestris (strain 8004).